Here is a 128-residue protein sequence, read N- to C-terminus: Large ribosomal subunit protein eL8 (128 aa).

This sequence belongs to the eukaryotic ribosomal protein eL8 family. As to quaternary structure, part of the 50S ribosomal subunit. Probably part of the RNase P complex.

Its subcellular location is the cytoplasm. In terms of biological role, multifunctional RNA-binding protein that recognizes the K-turn motif in ribosomal RNA, the RNA component of RNase P, box H/ACA, box C/D and box C'/D' sRNAs. In Staphylothermus marinus (strain ATCC 43588 / DSM 3639 / JCM 9404 / F1), this protein is Large ribosomal subunit protein eL8.